Consider the following 118-residue polypeptide: Phospholipase A2 'basic' (118 aa).

Cystine bridges form between Cys11/Cys70, Cys26/Cys117, Cys28/Cys44, Cys43/Cys98, Cys50/Cys91, Cys59/Cys84, and Cys77/Cys89. Positions 27, 29, and 31 each coordinate Ca(2+). The active site involves His47. Asp48 serves as a coordination point for Ca(2+). The Coagulation factor Xa binding motif motif lies at 52-69 (EKAGKMGCWPYLTLYKYK). Asp92 is a catalytic residue.

It belongs to the phospholipase A2 family. Group I subfamily. D49 sub-subfamily. Requires Ca(2+) as cofactor. In terms of tissue distribution, expressed by the venom gland.

The protein resides in the secreted. The enzyme catalyses a 1,2-diacyl-sn-glycero-3-phosphocholine + H2O = a 1-acyl-sn-glycero-3-phosphocholine + a fatty acid + H(+). Functionally, snake venom phospholipase A2 (PLA2) that shows strong anticoagulant activity. Binds directly with the coagulation factor FXa (F10) and blocks the formation of the prothombinase complex. Acts by a nonenzymatic mechanism. Also inhibits the complex composed of tissue factor (F3) and coagulation factor VIIa (F7) (TF-VIIa complex) by both enzymatic and nonenzymatic mechanisms. PLA2 catalyzes the calcium-dependent hydrolysis of the 2-acyl groups in 3-sn-phosphoglycerides. This chain is Phospholipase A2 'basic', found in Naja nigricollis (Black-necked spitting cobra).